The primary structure comprises 167 residues: Telethonin (167 aa).

At Ser39 the chain carries Phosphoserine. Residues 144 to 167 (VPVSKPGALRRSLSRSMSQEAQRG) form a disordered region. A compositionally biased stretch (polar residues) spans 157-167 (SRSMSQEAQRG).

As to quaternary structure, interacts with MYOZ1, MYOZ2 and MYOZ3. Interacts with CSRP3. Interacts directly with the N-terminal Ig-like domains of 2 titin (TTN) molecules. Interacts with ANKRD2; the interaction is direct. As to expression, heart and skeletal muscle.

It localises to the cytoplasm. The protein localises to the myofibril. It is found in the sarcomere. Functionally, muscle assembly regulating factor. Mediates the antiparallel assembly of titin (TTN) molecules at the sarcomeric Z-disk. In Homo sapiens (Human), this protein is Telethonin (TCAP).